Consider the following 134-residue polypeptide: Large ribosomal subunit protein mL41 (134 aa).

The transit peptide at 1–13 (MGFLTAVTQGLVR) directs the protein to the mitochondrion.

Belongs to the mitochondrion-specific ribosomal protein mL41 family. Component of the mitochondrial ribosome large subunit (39S) which comprises a 16S rRNA and about 50 distinct proteins. Interacts with BCL2. Was also identified in the 28S mitochondrial ribosome.

Its subcellular location is the mitochondrion. In terms of biological role, component of the mitochondrial ribosome large subunit. Also involved in apoptosis and cell cycle. Enhances p53/TP53 stability, thereby contributing to p53/TP53-induced apoptosis in response to growth-inhibitory condition. Enhances p53/TP53 translocation to the mitochondria. Has the ability to arrest the cell cycle at the G1 phase, possibly by stabilizing the CDKN1A and CDKN1B (p27Kip1) proteins. This chain is Large ribosomal subunit protein mL41 (Mrpl41), found in Rattus norvegicus (Rat).